A 207-amino-acid chain; its full sequence is Large ribosomal subunit protein uL4 (207 aa).

Positions 49 to 77 are disordered; that stretch reads HAVKNRSAVRGGGKKPWRQKGTGRARQGS. A compositionally biased stretch (basic residues) spans 60–71; sequence GGKKPWRQKGTG.

Belongs to the universal ribosomal protein uL4 family. Part of the 50S ribosomal subunit.

In terms of biological role, one of the primary rRNA binding proteins, this protein initially binds near the 5'-end of the 23S rRNA. It is important during the early stages of 50S assembly. It makes multiple contacts with different domains of the 23S rRNA in the assembled 50S subunit and ribosome. Its function is as follows. Forms part of the polypeptide exit tunnel. This is Large ribosomal subunit protein uL4 from Levilactobacillus brevis (strain ATCC 367 / BCRC 12310 / CIP 105137 / JCM 1170 / LMG 11437 / NCIMB 947 / NCTC 947) (Lactobacillus brevis).